A 513-amino-acid polypeptide reads, in one-letter code: Coniferin beta-glucosidase (513 aa).

The N-terminal stretch at 1–23 (MEVSVLMWVLLFYSLLGFQVTTA) is a signal peptide. A beta-D-glucoside is bound by residues Gln-44, His-145, and 190-191 (NE). Residue Glu-191 is the Proton donor of the active site. Cysteines 210 and 219 form a disulfide. Residue Asn-223 is glycosylated (N-linked (GlcNAc...) asparagine). Residues Tyr-336 and Glu-408 each coordinate a beta-D-glucoside. Glu-408 functions as the Nucleophile in the catalytic mechanism. N-linked (GlcNAc...) asparagine glycosylation is present at Asn-447. A beta-D-glucoside contacts are provided by residues Trp-457, 464–465 (EW), and Phe-473.

It belongs to the glycosyl hydrolase 1 family. As to quaternary structure, homodimer. Glycosylated.

The enzyme catalyses 4-O-(beta-D-glucosyl)-(E)-coniferol + H2O = (E)-coniferol + D-glucose. With respect to regulation, inhibited by glucono-1,5-lactone, but not by bromoconduritol or conduritol B epoxide. Functionally, involved in the release of monolignols for lignin biosynthesis. Unable to hydrolyze 4-nitrophenyl beta-cellobioside or alpha-linked methylumbelliferyl glucoside. The polypeptide is Coniferin beta-glucosidase (Pinus contorta (Shore pine)).